Consider the following 3460-residue polypeptide: MERSGWARQTFLLALLLGATLRARAAAGYYPRFSPFFFLCTHHGELEGDGEQGEVLISLHIAGNPTYYVPGQEYHVTISTSTFFDGLLVTGLYTSTSVQASQSIGGSSAFGFGIMSDHQFGNQFMCSVVASHVSHLPTTNLSFIWIAPPAGTGCVNFMATATHRGQVIFKDALAQQLCEQGAPTDVTVHPHLAEIHSDSIILRDDFDSYHQLQLNPNIWVECNNCETGEQCGAIMHGNAVTFCEPYGPRELITTGLNTTTASVLQFSIGSGSCRFSYSDPSIIVLYAKNNSADWIQLEKIRAPSNVSTIIHILYLPEDAKGENVQFQWKQENLRVGEVYEACWALDNILIINSAHRQVVLEDSLDPVDTGNWLFFPGATVKHSCQSDGNSIYFHGNEGSEFNFATTRDVDLSTEDIQEQWSEEFESQPTGWDVLGAVIGTECGTIESGLSMVFLKDGERKLCTPSMDTTGYGNLRFYFVMGGICDPGNSHENDIILYAKIEGRKEHITLDTLSYSSYKVPSLVSVVINPELQTPATKFCLRQKNHQGHNRNVWAVDFFHVLPVLPSTMSHMIQFSINLGCGTHQPGNSVSLEFSTNHGRSWSLLHTECLPEICAGPHLPHSTVYSSENYSGWNRITIPLPNAALTRNTRIRWRQTGPILGNMWAIDNVYIGPSCLKFCSGRGQCTRHGCKCDPGFSGPACEMASQTFPMFISESFGSSRLSSYHNFYSIRGAEVSFGCGVLASGKALVFNKDGRRQLITSFLDSSQSRFLQFTLRLGSKSVLSTCRAPDQPGEGVLLHYSYDNGITWKLLEHYSYLSYHEPRIISVELPGDAKQFGIQFRWWQPYHSSQREDVWAIDEIIMTSVLFNSISLDFTNLVEVTQSLGFYLGNVQPYCGHDWTLCFTGDSKLASSMRYVETQSMQIGASYMIQFSLVMGCGQKYTPHMDNQVKLEYSTNHGLTWHLVQEECLPSMPSCQEFTSASIYHASEFTQWRRVIVLLPQKTWSSATRFRWSQSYYTAQDEWALDSIYIGQQCPNMCSGHGSCDHGICRCDQGYQGTECHPEAALPSTIMSDFENQNGWESDWQEVIGGEIVKPEQGCGVISSGSSLYFSKAGKRQLVSWDLDTSWVDFVQFYIQIGGESASCNKPDSREEGVLLQYSNNGGIQWHLLAEMYFSDFSKPRFVYLELPAAAKTPCTRFRWWQPVFSGEDYDQWAVDDIIILSEKQKQIIPVINPTLPQNFYEKPAFDYPMNQMSVWLMLANEGMVKNETFCAATPSAMIFGKSDGDRFAVTRDLTLKPGYVLQFKLNIGCANQFSSTAPVLLQYSHDAGMSWFLVKEGCYPASAGKGCEGNSRELSEPTMYHTGDFEEWTRITIVIPRSLASSKTRFRWIQESSSQKNVPPFGLDGVYISEPCPSYCSGHGDCISGVCFCDLGYTAAQGTCVSNVPNHNEMFDRFEGKLSPLWYKITGAQVGTGCGTLNDGKSLYFNGPGKREARTVPLDTRNIRLVQFYIQIGSKTSGITCIKPRTRNEGLIVQYSNDNGILWHLLRELDFMSFLEPQIISIDLPQDAKTPATAFRWWQPQHGKHSAQWALDDVLIGMNDSSQTGFQDKFDGSIDLQANWYRIQGGQVDIDCLSMDTALIFTENIGKPRYAETWDFHVSASTFLQFEMSMGCSKPFSNSHSVQLQYSLNNGKDWHLVTEECVPPTIGCLHYTESSIYTSERFQNWKRITVYLPLSTISPRTRFRWIQANYTVGADSWAIDNVVLASGCPWMCSGRGICDAGRCVCDRGFGGPYCVPVVPLPSILKDDFNGNLHPDLWPEVYGAERGNLNGETIKSGTSLIFKGEGLRMLISRDLDCTNTMYVQFSLRFIAKSTPERSHSILLQFSISGGITWHLMDEFYFPQTTNILFINVPLPYTAQTNATRFRLWQPYNNGKKEEIWIVDDFIIDGNNVNNPVMLLDTFDFGPREDNWFFYPGGNIGLYCPYSSKGAPEEDSAMVFVSNEVGEHSITTRDLNVNENTIIQFEINVGCSTDSSSADPVRLEFSRDFGATWHLLLPLCYHSSSHVSSLCSTEHHPSSTYYAGTMQGWRREVVHFGKLHLCGSVRFRWYQGFYPAGSQPVTWAIDNVYIGPQCEEMCNGQGSCINGTKCICDPGYSGPTCKISTKNPDFLKDDFEGQLESDRFLLMSGGKPSRKCGILSSGNNLFFNEDGLRMLMTRDLDLSHARFVQFFMRLGCGKGVPDPRSQPVLLQYSLNGGLSWSLLQEFLFSNSSNVGRYIALEIPLKARSGSTRLRWWQPSENGHFYSPWVIDQILIGGNISGNTVLEDDFTTLDSRKWLLHPGGTKMPVCGSTGDALVFIEKASTRYVVSTDVAVNEDSFLQIDFAASCSVTDSCYAIELEYSVDLGLSWHPLVRDCLPTNVECSRYHLQRILVSDTFNKWTRITLPLPPYTRSQATRFRWHQPAPFDKQQTWAIDNVYIGDGCIDMCSGHGRCIQGNCVCDEQWGGLYCDDPETSLPTQLKDNFNRAPSSQNWLTVNGGKLSTVCGAVASGMALHFSGGCSRLLVTVDLNLTNAEFIQFYFMYGCLITPNNRNQGVLLEYSVNGGITWNLLMEIFYDQYSKPGFVNILLPPDAKEIATRFRWWQPRHDGLDQNDWAIDNVLISGSADQRTVMLDTFSSAPVPQHERSPADAGPVGRIAFDMFMEDKTSVNEHWLFHDDCTVERFCDSPDGVMLCGSHDGREVYAVTHDLTPTEGWIMQFKISVGCKVSEKIAQNQIHVQYSTDFGVSWNYLVPQCLPADPKCSGSVSQPSVFFPTKGWKRITYPLPESLVGNPVRFRFYQKYSDMQWAIDNFYLGPGCLDNCRGHGDCLREQCICDPGYSGPNCYLTHTLKTFLKERFDSEEIKPDLWMSLEGGSTCTECGILAEDTALYFGGSTVRQAVTQDLDLRGAKFLQYWGRIGSENNMTSCHRPICRKEGVLLDYSTDGGITWTLLHEMDYQKYISVRHDYILLPEDALTNTTRLRWWQPFVISNGIVVSGVERAQWALDNILIGGAEINPSQLVDTFDDEGTSHEENWSFYPNAVRTAGFCGNPSFHLYWPNKKKDKTHNALSSRELIIQPGYMMQFKIVVGCEATSCGDLHSVMLEYTKDARSDSWQLVQTQCLPSSSNSIGCSPFQFHEATIYNSVNSSSWKRITIQLPDHVSSSATQFRWIQKGEETEKQSWAIDHVYIGEACPKLCSGHGYCTTGAICICDESFQGDDCSVFSHDLPSYIKDNFESARVTEANWETIQGGVIGSGCGQLAPYAHGDSLYFNGCQIRQAATKPLDLTRASKIMFVLQIGSMSQTDSCNSDLSGPHAVDKAVLLQYSVNNGITWHVIAQHQPKDFTQAQRVSYNVPLEARMKGVLLRWWQPRHNGTGHDQWALDHVEVVLVSTRKQNYMMNFSRQHGLRHFYNRRRRSLRRYP.

An N-terminal signal peptide occupies residues 1–25 (MERSGWARQTFLLALLLGATLRARA). Residues 26–190 (AAGYYPRFSP…GAPTDVTVHP (165 aa)) form the Reelin domain. A disulfide bridge connects residues Cys-40 and Cys-126. Asn-140 carries N-linked (GlcNAc...) asparagine glycosylation. An intrachain disulfide couples Cys-154 to Cys-178. N-linked (GlcNAc...) asparagine glycosylation is found at Asn-257, Asn-289, and Asn-305. An intrachain disulfide couples Cys-539 to Cys-580. Residues 592–603 (EFSTNHGRSWSL) form a BNR 1 repeat. The cysteines at positions 608 and 613 are disulfide-linked. Asn-628 is a glycosylation site (N-linked (GlcNAc...) asparagine). Residues 670 to 701 (IGPSCLKFCSGRGQCTRHGCKCDPGFSGPACE) form the EGF-like 1 domain. Disulfide bonds link Cys-674–Cys-684 and Cys-691–Cys-700. A BNR 2 repeat occupies 798–809 (HYSYDNGITWKL). A disulfide bond links Cys-894 and Cys-936. The stretch at 951 to 962 (EYSTNHGLTWHL) is one BNR 3 repeat. 3 disulfides stabilise this stretch: Cys-967-Cys-974, Cys-1033-Cys-1043, and Cys-1050-Cys-1059. The region spanning 1029 to 1060 (IGQQCPNMCSGHGSCDHGICRCDQGYQGTECH) is the EGF-like 2 domain. Residues 1156–1167 (QYSNNGGIQWHL) form a BNR 4 repeat. Asn-1266 is a glycosylation site (N-linked (GlcNAc...) asparagine). An intrachain disulfide couples Cys-1270 to Cys-1309. A BNR 5 repeat occupies 1322-1333 (QYSHDAGMSWFL). An intrachain disulfide couples Cys-1338 to Cys-1347. The EGF-like 3 domain occupies 1408–1441 (ISEPCPSYCSGHGDCISGVCFCDLGYTAAQGTCV). One copy of the BNR 6 repeat lies at 1534 to 1545 (QYSNDNGILWHL). Asn-1599 carries an N-linked (GlcNAc...) asparagine glycan. The cysteines at positions 1632 and 1672 are disulfide-linked. The stretch at 1685-1696 (QYSLNNGKDWHL) is one BNR 7 repeat. A disulfide bridge connects residues Cys-1701 and Cys-1708. Asn-1749 carries N-linked (GlcNAc...) asparagine glycosylation. Residues 1764–1795 (LASGCPWMCSGRGICDAGRCVCDRGFGGPYCV) enclose the EGF-like 4 domain. A BNR 8 repeat occupies 1883-1894 (QFSISGGITWHL). N-linked (GlcNAc...) asparagine glycosylation occurs at Asn-1920. Residues 2042–2053 (EFSRDFGATWHL) form a BNR 9 repeat. Residues His-2060 and His-2073 each contribute to the Zn(2+) site. The region spanning 2128–2160 (IGPQCEEMCNGQGSCINGTKCICDPGYSGPTCK) is the EGF-like 5 domain. 3 disulfide bridges follow: Cys-2132–Cys-2142, Cys-2136–Cys-2148, and Cys-2150–Cys-2159. Asn-2144 is a glycosylation site (N-linked (GlcNAc...) asparagine). Glu-2178 is a binding site for Zn(2+). Cysteines 2194 and 2234 form a disulfide. The BNR 10 repeat unit spans residues 2249–2260 (QYSLNGGLSWSL). Residue Glu-2263 coordinates Zn(2+). N-linked (GlcNAc...) asparagine glycosylation is found at Asn-2268 and Asn-2316. Cystine bridges form between Cys-2347–Cys-2386, Cys-2392–Cys-2558, and Cys-2543–Cys-2583. The Zn(2+) site is built by Glu-2396, Glu-2398, and His-2459. One copy of the BNR 11 repeat lies at 2398–2409 (EYSVDLGLSWHP). The 32-residue stretch at 2477-2508 (IGDGCIDMCSGHGRCIQGNCVCDEQWGGLYCD) folds into the EGF-like 6 domain. A glycan (N-linked (GlcNAc...) asparagine) is linked at Asn-2568. BNR repeat units lie at residues 2597 to 2608 (EYSVNGGITWNL) and 2777 to 2788 (QYSTDFGVSWNY). Intrachain disulfides connect Cys-2793–Cys-2800, Cys-2856–Cys-2866, Cys-2860–Cys-2871, Cys-2873–Cys-2882, and Cys-2918–Cys-2965. The 32-residue stretch at 2852–2883 (LGPGCLDNCRGHGDCLREQCICDPGYSGPNCY) folds into the EGF-like 7 domain. N-linked (GlcNAc...) asparagine glycosylation occurs at Asn-2961. A BNR 14 repeat occupies 2978–2989 (DYSTDGGITWTL). Residues Asn-3015 and Asn-3072 are each glycosylated (N-linked (GlcNAc...) asparagine). A BNR 15 repeat occupies 3142–3154 (EYTKDARSDSWQL). Cys-3159 and Cys-3169 form a disulfide bridge. N-linked (GlcNAc...) asparagine glycosylation occurs at Asn-3184. The EGF-like 8 domain occupies 3227 to 3259 (IGEACPKLCSGHGYCTTGAICICDESFQGDDCS). 4 disulfides stabilise this stretch: Cys-3231–Cys-3241, Cys-3235–Cys-3247, Cys-3249–Cys-3258, and Cys-3295–Cys-3345. A BNR 16 repeat occupies 3362-3373 (QYSVNNGITWHV). 2 N-linked (GlcNAc...) asparagine glycosylation sites follow: Asn-3411 and Asn-3438.

Belongs to the reelin family. In terms of assembly, oligomer of disulfide-linked homodimers. Post-translationally, N-glycosylated and to a lesser extent also O-glycosylated. Abundantly produced during brain ontogenesis by the Cajal-Retzius cells and other pioneer neurons located in the telencephalic marginal zone and by granule cells of the external granular layer of the cerebellum. In adult brain, preferentially expressed in GABAergic interneurons of prefrontal cortices, temporal cortex, hippocampus and glutamatergic granule cells of cerebellum. Expression is reduced to about 50% in patients with schizophrenia. Also expressed in fetal and adult liver.

It is found in the secreted. Its subcellular location is the extracellular space. It localises to the extracellular matrix. Its function is as follows. Extracellular matrix serine protease secreted by pioneer neurons that plays a role in layering of neurons in the cerebral cortex and cerebellum by coordinating cell positioning during neurodevelopment. Regulates microtubule function in neurons and neuronal migration. Binding to the extracellular domains of lipoprotein receptors VLDLR and LRP8/APOER2 induces tyrosine phosphorylation of DAB1 and modulation of TAU phosphorylation. Affects migration of sympathetic preganglionic neurons in the spinal cord, where it seems to act as a barrier to neuronal migration. Enzymatic activity is important for the modulation of cell adhesion. The chain is Reelin (RELN) from Homo sapiens (Human).